A 251-amino-acid chain; its full sequence is Small ribosomal subunit protein uS2 (251 aa).

The disordered stretch occupies residues 232 to 251 (LQTGEEEMAAAEGESEQVEA). The span at 235–251 (GEEEMAAAEGESEQVEA) shows a compositional bias: acidic residues.

Belongs to the universal ribosomal protein uS2 family.

The polypeptide is Small ribosomal subunit protein uS2 (Geobacter metallireducens (strain ATCC 53774 / DSM 7210 / GS-15)).